Here is a 289-residue protein sequence, read N- to C-terminus: uncharacterized protein (289 aa).

The tract at residues 25 to 66 (GGSGDSQSAHTPSTSIHTQNNSTPNKNTSTPPVNVSNANNLE) is disordered. Residues 33-43 (AHTPSTSIHTQ) show a composition bias toward polar residues. The segment covering 44–59 (NNSTPNKNTSTPPVNV) has biased composition (low complexity).

This is an uncharacterized protein from Haemophilus influenzae (strain ATCC 51907 / DSM 11121 / KW20 / Rd).